Reading from the N-terminus, the 342-residue chain is 29 kDa ribonucleoprotein, chloroplastic (342 aa).

Residues Met1–Arg65 constitute a chloroplast transit peptide. An RRM 1 domain is found at Leu99–Pro177. A phosphoserine mark is found at Ser107 and Ser204. The tract at residues Gly167–Ser255 is disordered. The linker (Gly-rich) stretch occupies residues Pro178–Gly256. Composition is skewed to gly residues over residues Arg190–Gly237 and Ser245–Ser255. In terms of domain architecture, RRM 2 spans Asn257 to Ala335.

The protein localises to the plastid. It localises to the chloroplast. Functionally, stabilizes specific chloroplast mRNAs. Required for normal chloroplast development under cold stress conditions by stabilizing transcripts of numerous mRNAs under these conditions. The protein is 29 kDa ribonucleoprotein, chloroplastic of Arabidopsis thaliana (Mouse-ear cress).